A 743-amino-acid chain; its full sequence is Catalase-peroxidase (743 aa).

The tract at residues 1–21 (MSENHETVVSELNEESGGGCP) is disordered. The segment at residues 108–231 (WHSAGTYRIS…LGAVQMGLIY (124 aa)) is a cross-link (tryptophyl-tyrosyl-methioninium (Trp-Tyr) (with M-257)). The active-site Proton acceptor is the His109. Positions 231–257 (YVNPEGPNGTPDPLAAARDIRETFRRM) form a cross-link, tryptophyl-tyrosyl-methioninium (Tyr-Met) (with W-108). Heme b is bound at residue His272. A disordered region spans residues 275–296 (GKTHGAGDPDNVGPEPEGAPLE).

The protein belongs to the peroxidase family. Peroxidase/catalase subfamily. In terms of assembly, homodimer or homotetramer. It depends on heme b as a cofactor. Formation of the three residue Trp-Tyr-Met cross-link is important for the catalase, but not the peroxidase activity of the enzyme.

It carries out the reaction H2O2 + AH2 = A + 2 H2O. The enzyme catalyses 2 H2O2 = O2 + 2 H2O. In terms of biological role, bifunctional enzyme with both catalase and broad-spectrum peroxidase activity. This is Catalase-peroxidase from Parafrankia sp. (strain EAN1pec).